We begin with the raw amino-acid sequence, 681 residues long: Auxin response factor 8 (681 aa).

A DNA-binding region (TF-B3) is located at residues 120-222 (FAKTLTQSDA…DLHVGIRRAK (103 aa)). 2 disordered regions span residues 474 to 518 (LRRP…AKPP) and 534 to 577 (SLSG…TSSE). Polar residues-rich tracts occupy residues 534 to 555 (SLSG…NTEK) and 564 to 577 (GVIQ…TSSE). In terms of domain architecture, PB1 spans 595-675 (PGQCKVFIES…RRLTILTDAG (81 aa)).

It belongs to the ARF family. Homodimers and heterodimers. In terms of tissue distribution, expressed in roots, culms, leaves and young panicles.

It localises to the nucleus. In terms of biological role, auxin response factors (ARFs) are transcriptional factors that bind specifically to the DNA sequence 5'-TGTCTC-3' found in the auxin-responsive promoter elements (AuxREs). The polypeptide is Auxin response factor 8 (ARF8) (Oryza sativa subsp. japonica (Rice)).